A 204-amino-acid polypeptide reads, in one-letter code: LexA repressor (204 aa).

Positions 29–49 form a DNA-binding region, H-T-H motif; that stretch reads VREIGDAVGLMSSSTVHGHLQ. Active-site for autocatalytic cleavage activity residues include S127 and K164.

The protein belongs to the peptidase S24 family. As to quaternary structure, homodimer.

The catalysed reaction is Hydrolysis of Ala-|-Gly bond in repressor LexA.. Its function is as follows. Represses a number of genes involved in the response to DNA damage (SOS response), including recA and lexA. In the presence of single-stranded DNA, RecA interacts with LexA causing an autocatalytic cleavage which disrupts the DNA-binding part of LexA, leading to derepression of the SOS regulon and eventually DNA repair. This chain is LexA repressor, found in Desulfitobacterium hafniense (strain DSM 10664 / DCB-2).